The sequence spans 122 residues: Small ribosomal subunit protein uS13 (122 aa).

Positions 94 to 122 (LSLPVRGQRTKTNSRTRKGKRKTVAGKKK) are disordered. Basic residues predominate over residues 101-122 (QRTKTNSRTRKGKRKTVAGKKK).

It belongs to the universal ribosomal protein uS13 family. In terms of assembly, part of the 30S ribosomal subunit. Forms a loose heterodimer with protein S19. Forms two bridges to the 50S subunit in the 70S ribosome.

Located at the top of the head of the 30S subunit, it contacts several helices of the 16S rRNA. In the 70S ribosome it contacts the 23S rRNA (bridge B1a) and protein L5 of the 50S subunit (bridge B1b), connecting the 2 subunits; these bridges are implicated in subunit movement. Contacts the tRNAs in the A and P-sites. The polypeptide is Small ribosomal subunit protein uS13 (Chlamydia muridarum (strain MoPn / Nigg)).